A 353-amino-acid polypeptide reads, in one-letter code: Photosystem II D2 protein (353 aa).

N-acetylthreonine is present on Thr2. Thr2 bears the Phosphothreonine mark. The helical transmembrane segment at 41–61 (CAYFALGGWFTGTTFVTSWYT) threads the bilayer. Residue His118 participates in chlorophyll a binding. The chain crosses the membrane as a helical span at residues 125–141 (GFMLRQFELARSVQLRP). Residues Gln130 and Asn143 each coordinate pheophytin a. A helical transmembrane segment spans residues 153–166 (VFVSVFLIYPLGQS). His198 is a chlorophyll a binding site. A helical transmembrane segment spans residues 208–228 (AALLCAIHGATVENTLFEDGD). The a plastoquinone site is built by His215 and Phe262. Residue His215 participates in Fe cation binding. Residue His269 participates in Fe cation binding. The chain crosses the membrane as a helical span at residues 279–295 (GLWMSALGVVGLALNLR).

This sequence belongs to the reaction center PufL/M/PsbA/D family. As to quaternary structure, PSII is composed of 1 copy each of membrane proteins PsbA, PsbB, PsbC, PsbD, PsbE, PsbF, PsbH, PsbI, PsbJ, PsbK, PsbL, PsbM, PsbT, PsbX, PsbY, PsbZ, Psb30/Ycf12, at least 3 peripheral proteins of the oxygen-evolving complex and a large number of cofactors. It forms dimeric complexes. The D1/D2 heterodimer binds P680, chlorophylls that are the primary electron donor of PSII, and subsequent electron acceptors. It shares a non-heme iron and each subunit binds pheophytin, quinone, additional chlorophylls, carotenoids and lipids. There is also a Cl(-1) ion associated with D1 and D2, which is required for oxygen evolution. The PSII complex binds additional chlorophylls, carotenoids and specific lipids. serves as cofactor.

Its subcellular location is the plastid. The protein resides in the chloroplast thylakoid membrane. The enzyme catalyses 2 a plastoquinone + 4 hnu + 2 H2O = 2 a plastoquinol + O2. Functionally, photosystem II (PSII) is a light-driven water:plastoquinone oxidoreductase that uses light energy to abstract electrons from H(2)O, generating O(2) and a proton gradient subsequently used for ATP formation. It consists of a core antenna complex that captures photons, and an electron transfer chain that converts photonic excitation into a charge separation. The D1/D2 (PsbA/PsbD) reaction center heterodimer binds P680, the primary electron donor of PSII as well as several subsequent electron acceptors. D2 is needed for assembly of a stable PSII complex. The sequence is that of Photosystem II D2 protein from Morus indica (Mulberry).